The chain runs to 210 residues: Protein GrpE (210 aa).

Disordered stretches follow at residues 1–40 (MTDDTTKNGPDATAADAAADATAYVENETAQQEPAQPDPI) and 191–210 (KGGPKPAEAETNSVFDEKDA). Residues 11–23 (DATAADAAADATA) show a composition bias toward low complexity.

It belongs to the GrpE family. In terms of assembly, homodimer.

The protein resides in the cytoplasm. Its function is as follows. Participates actively in the response to hyperosmotic and heat shock by preventing the aggregation of stress-denatured proteins, in association with DnaK and GrpE. It is the nucleotide exchange factor for DnaK and may function as a thermosensor. Unfolded proteins bind initially to DnaJ; upon interaction with the DnaJ-bound protein, DnaK hydrolyzes its bound ATP, resulting in the formation of a stable complex. GrpE releases ADP from DnaK; ATP binding to DnaK triggers the release of the substrate protein, thus completing the reaction cycle. Several rounds of ATP-dependent interactions between DnaJ, DnaK and GrpE are required for fully efficient folding. The sequence is that of Protein GrpE from Rhizobium johnstonii (strain DSM 114642 / LMG 32736 / 3841) (Rhizobium leguminosarum bv. viciae).